A 157-amino-acid polypeptide reads, in one-letter code: Protein-export protein SecB (157 aa).

The protein belongs to the SecB family. Homotetramer, a dimer of dimers. One homotetramer interacts with 1 SecA dimer.

The protein localises to the cytoplasm. One of the proteins required for the normal export of preproteins out of the cell cytoplasm. It is a molecular chaperone that binds to a subset of precursor proteins, maintaining them in a translocation-competent state. It also specifically binds to its receptor SecA. This is Protein-export protein SecB from Shewanella frigidimarina (strain NCIMB 400).